The following is a 561-amino-acid chain: Embryonal Fyn-associated substrate (561 aa).

The region spanning 5–68 (TSTQLARALY…PANRVKLLPA (64 aa)) is the SH3 domain. Disordered stretches follow at residues 68 to 123 (AGPA…CPPS), 171 to 215 (HPLT…PGPP), 240 to 372 (LADG…HNEY), and 390 to 422 (DKAQ…ALSP). The segment covering 103-123 (VPPPARPCPTSGPPAGPCPPS) has biased composition (pro residues). Tyrosine 253 carries the phosphotyrosine; by SRC modification. Short sequence motifs (SH3-binding) lie at residues 305–311 (RPLPALP) and 335–341 (RPLPPPP). Over residues 308 to 325 (PALPVPEAPSPSPVPSPA) the composition is skewed to pro residues. The span at 352 to 372 (VEGDPEGREMEDDPAGHHNEY) shows a compositional bias: basic and acidic residues. A divergent helix-loop-helix motif region spans residues 438-488 (FYAGQCQSHYSALQAAVAALMSSTQANQPPRLFVPHSKRVVVAAHRLVFVG).

Belongs to the CAS family. In terms of processing, phosphorylated on multiple tyrosine residues. Phosphorylated on tyrosines by FYN and SRC. In terms of tissue distribution, the protein has been detected in lung and placenta.

Functionally, docking protein which plays a central coordinating role for tyrosine-kinase-based signaling related to cell adhesion. May serve as an activator of SRC and a downstream effector. Interacts with the SH3 domain of FYN and with CRK, SRC, and YES. The protein is Embryonal Fyn-associated substrate (EFS) of Homo sapiens (Human).